Here is a 305-residue protein sequence, read N- to C-terminus: Target of rapamycin complex subunit LST8-1 (305 aa).

WD repeat units follow at residues 1-30 (MSQP…CYRT), 33-71 (YPDS…PQPV), 76-115 (SHTN…CQKE), 117-156 (ESVA…CSCE), 160-199 (EVDT…QTMT), 209-248 (AHNG…LEKV), and 251-292 (GHQR…KVYQ).

It belongs to the WD repeat LST8 family. The target of rapamycin complex 1 (TORC1) is composed of at least RAPTOR, LST8 and TOR. Interacts with TOR. As to expression, expressed in the root central cylinder, root tips, emerging lateral roots, vasculature of cotyledons, leaf stomata, leaf stipules, anthers, pollen, filaments, and vasculature of petals and sepals.

The protein resides in the endosome. Component of TORC1 complex, which is an essential cell growth regulator that controls plant development. Acts by activating transcription, protein synthesis and ribosome biogenesis, and inhibiting mRNA degradation and autophagy. Involved in regulating amino acid accumulation and the synthesis of myo-inositol and raffinose during plant adaptation to long days. Involved in the regulation of plant growth and abscisic acid (ABA) accumulation. Acts as a positive regulation of the ABA biosynthetic genes ZEP, NCED3 and AAO3, and negative regulator of the ABA catabolic genes CYP707A2 and CYP707A3. The chain is Target of rapamycin complex subunit LST8-1 from Arabidopsis thaliana (Mouse-ear cress).